The sequence spans 417 residues: Acetate kinase (417 aa).

N9 is a binding site for Mg(2+). Residue K16 coordinates ATP. Residue R90 coordinates substrate. D147 (proton donor/acceptor) is an active-site residue. Residues H207–G211, D282–R284, and G330–N334 contribute to the ATP site. Residue E384 participates in Mg(2+) binding.

The protein belongs to the acetokinase family. In terms of assembly, homodimer. Mg(2+) is required as a cofactor. It depends on Mn(2+) as a cofactor.

It is found in the cytoplasm. It catalyses the reaction acetate + ATP = acetyl phosphate + ADP. It participates in metabolic intermediate biosynthesis; acetyl-CoA biosynthesis; acetyl-CoA from acetate: step 1/2. Functionally, catalyzes the formation of acetyl phosphate from acetate and ATP. Can also catalyze the reverse reaction. The chain is Acetate kinase from Staphylococcus epidermidis (strain ATCC 35984 / DSM 28319 / BCRC 17069 / CCUG 31568 / BM 3577 / RP62A).